Here is a 590-residue protein sequence, read N- to C-terminus: RNA-binding protein 47 (590 aa).

Residues 1–21 are compositionally biased toward polar residues; it reads MTAEDSTTAMNSDPTVGSSTK. A disordered region spans residues 1-26; it reads MTAEDSTTAMNSDPTVGSSTKVPEGV. RRM domains are found at residues 71 to 149, 151 to 233, and 246 to 318; these read CEVF…CSVD, CRLF…WAEP, and KILY…LAKP. 2 positions are modified to asymmetric dimethylarginine; alternate: R396 and R407. R396 and R407 each carry omega-N-methylarginine; alternate.

Belongs to the RRM RBM47 family. As to quaternary structure, homodimer. Interacts with A1CF. Interacts with APOBEC1; form an mRNA editing complex. Interacts with RBPMS.

It localises to the nucleus. The protein localises to the cytoplasm. Its function is as follows. Single-stranded RNA-binding protein that functions in a variety of RNA processes, including alternative splicing, RNA stabilization, and RNA editing. Functions as an enzyme-substrate adapter for the cytidine deaminase APOBEC1. With APOBEC1 forms an mRNA editing complex involved into cytidine to uridine editing of a variety of mRNA molecules. Through the binding of their 3'UTR, also stabilizes a variety of mRNAs and regulates the expression of genes such as the interferon alpha/beta receptor and interleukin-10. Also involved in the alternative splicing of several genes including TJP1. Binds the pre-mRNA (U)GCAUG consensus sequences in downstream intronic regions of alternative exons regulating their exclusion and inclusion into mRNAs. Independently of its RNA-binding activity, could negatively regulate MAVS by promoting its lysosomal degradation. The polypeptide is RNA-binding protein 47 (Rattus norvegicus (Rat)).